We begin with the raw amino-acid sequence, 127 residues long: Glycine cleavage system H protein (127 aa).

In terms of domain architecture, Lipoyl-binding spans 22–104; sequence KARIGITHFA…YEKAWMIVVE (83 aa). The residue at position 63 (lysine 63) is an N6-lipoyllysine.

It belongs to the GcvH family. The glycine cleavage system is composed of four proteins: P, T, L and H. It depends on (R)-lipoate as a cofactor.

The glycine cleavage system catalyzes the degradation of glycine. The H protein shuttles the methylamine group of glycine from the P protein to the T protein. Its function is as follows. Is also involved in protein lipoylation via its role as an octanoyl/lipoyl carrier protein intermediate. The polypeptide is Glycine cleavage system H protein (Bacillus velezensis (strain DSM 23117 / BGSC 10A6 / LMG 26770 / FZB42) (Bacillus amyloliquefaciens subsp. plantarum)).